The following is a 432-amino-acid chain: Glutamate-1-semialdehyde 2,1-aminomutase (432 aa).

The residue at position 267 (Lys-267) is an N6-(pyridoxal phosphate)lysine.

It belongs to the class-III pyridoxal-phosphate-dependent aminotransferase family. HemL subfamily. As to quaternary structure, homodimer. Pyridoxal 5'-phosphate serves as cofactor.

It is found in the cytoplasm. The catalysed reaction is (S)-4-amino-5-oxopentanoate = 5-aminolevulinate. The protein operates within porphyrin-containing compound metabolism; protoporphyrin-IX biosynthesis; 5-aminolevulinate from L-glutamyl-tRNA(Glu): step 2/2. The chain is Glutamate-1-semialdehyde 2,1-aminomutase from Rhodococcus erythropolis (strain PR4 / NBRC 100887).